The sequence spans 144 residues: Large ribosomal subunit protein uL15 (144 aa).

The segment at 1–52 (MRLNSLSPAEGAKHSAKRLGRGIGSGLGKTGGRGHKGQKSRTGGGVRRGFEG) is disordered. The segment covering 21 to 31 (RGIGSGLGKTG) has biased composition (gly residues).

Belongs to the universal ribosomal protein uL15 family. In terms of assembly, part of the 50S ribosomal subunit.

Its function is as follows. Binds to the 23S rRNA. In Actinobacillus pleuropneumoniae serotype 5b (strain L20), this protein is Large ribosomal subunit protein uL15.